The sequence spans 176 residues: SsrA-binding protein (176 aa).

The segment at 1–33 (MTEAGAKKAAGKKSGKGKGKNAKKNQPNITPVA) is disordered. The span at 9–23 (AAGKKSGKGKGKNAK) shows a compositional bias: basic residues.

Belongs to the SmpB family.

It localises to the cytoplasm. In terms of biological role, required for rescue of stalled ribosomes mediated by trans-translation. Binds to transfer-messenger RNA (tmRNA), required for stable association of tmRNA with ribosomes. tmRNA and SmpB together mimic tRNA shape, replacing the anticodon stem-loop with SmpB. tmRNA is encoded by the ssrA gene; the 2 termini fold to resemble tRNA(Ala) and it encodes a 'tag peptide', a short internal open reading frame. During trans-translation Ala-aminoacylated tmRNA acts like a tRNA, entering the A-site of stalled ribosomes, displacing the stalled mRNA. The ribosome then switches to translate the ORF on the tmRNA; the nascent peptide is terminated with the 'tag peptide' encoded by the tmRNA and targeted for degradation. The ribosome is freed to recommence translation, which seems to be the essential function of trans-translation. The polypeptide is SsrA-binding protein (Rhodopirellula baltica (strain DSM 10527 / NCIMB 13988 / SH1)).